The chain runs to 457 residues: Methylenetetrahydrofolate--tRNA-(uracil-5-)-methyltransferase TrmFO (457 aa).

Residue 8–13 (GGGLAG) participates in FAD binding.

Belongs to the MnmG family. TrmFO subfamily. Requires FAD as cofactor.

The protein localises to the cytoplasm. It catalyses the reaction uridine(54) in tRNA + (6R)-5,10-methylene-5,6,7,8-tetrahydrofolate + NADH + H(+) = 5-methyluridine(54) in tRNA + (6S)-5,6,7,8-tetrahydrofolate + NAD(+). The enzyme catalyses uridine(54) in tRNA + (6R)-5,10-methylene-5,6,7,8-tetrahydrofolate + NADPH + H(+) = 5-methyluridine(54) in tRNA + (6S)-5,6,7,8-tetrahydrofolate + NADP(+). Catalyzes the folate-dependent formation of 5-methyl-uridine at position 54 (M-5-U54) in all tRNAs. The sequence is that of Methylenetetrahydrofolate--tRNA-(uracil-5-)-methyltransferase TrmFO from Thermosynechococcus vestitus (strain NIES-2133 / IAM M-273 / BP-1).